Reading from the N-terminus, the 689-residue chain is Solute carrier family 22 member 23 (689 aa).

Disordered stretches follow at residues 1 to 55 (MAID…PLPA) and 162 to 188 (TASWGTTSNRSNSSDTPPLPSPPGKGN). An N-linked (GlcNAc...) asparagine glycan is attached at N24. A compositionally biased stretch (polar residues) spans 165–177 (WGTTSNRSNSSDT). 2 helical membrane passes run 229 to 249 (FSLLVGLIFGYLITGCIADWV) and 253 to 273 (PVLLFSVIFILIFGLTVALSV). N-linked (GlcNAc...) asparagine glycosylation is present at N274. Helical transmembrane passes span 283 to 303 (FFEGFCLAGIILTLYALRIEL), 310 to 330 (FIITMVASFVAMAGQFLMPGL), 339 to 359 (VLQALIICPFLLMLLYWSIFP), 462 to 482 (ADYYTMASIALASCLAMCLVV), 489 to 509 (GGLLLFMILTALASLLQLGLL), 541 to 561 (IAFSIVGMFASHAVGSLSVFF), 572 to 592 (CGGLGLVLASAGFGMLTAPII), and 601 to 621 (FLHHIIFACCTLICIICILLL).

The protein belongs to the major facilitator (TC 2.A.1) superfamily. Organic cation transporter (TC 2.A.1.19) family. In terms of tissue distribution, expressed in many tissues, including brain, spinal cord, kidney, liver, eye, adipose tissue, lung, epididymis, adrenal gland, pineal gland, skeletal muscle, heart, spleen, thymus, ovary, uterus, testis and epididymis.

Its subcellular location is the membrane. The polypeptide is Solute carrier family 22 member 23 (Slc22a23) (Rattus norvegicus (Rat)).